The sequence spans 178 residues: Bifunctional protein PyrR (178 aa).

Substrate contacts are provided by residues 42 to 43 (TR), Arg83, 103 to 111 (DDVIYKGRT), Arg136, and Val160. Positions 99–111 (VVLVDDVIYKGRT) match the PRPP-binding motif.

It belongs to the purine/pyrimidine phosphoribosyltransferase family. PyrR subfamily.

The catalysed reaction is UMP + diphosphate = 5-phospho-alpha-D-ribose 1-diphosphate + uracil. In terms of biological role, regulates the transcription of the pyrimidine nucleotide (pyr) operon in response to exogenous pyrimidines. Functionally, also displays a weak uracil phosphoribosyltransferase activity which is not physiologically significant. In Synechocystis sp. (strain ATCC 27184 / PCC 6803 / Kazusa), this protein is Bifunctional protein PyrR.